The sequence spans 71 residues: Long neurotoxin Tx-NM3-1 (71 aa).

5 disulfides stabilise this stretch: cysteine 3–cysteine 20, cysteine 14–cysteine 41, cysteine 26–cysteine 30, cysteine 45–cysteine 56, and cysteine 57–cysteine 62.

In terms of tissue distribution, expressed by the venom gland.

Its subcellular location is the secreted. Functionally, binds with high affinity to muscular (alpha-1-beta-1-gamma-delta/CHRNA1-CHRNB1-CHRNG-CHRND) and neuronal (alpha-7/CHRNA7) nicotinic acetylcholine receptor (nAChR) and inhibits acetylcholine from binding to the receptor, thereby impairing neuromuscular and neuronal transmission. Ranges of nAChR inhibition are in nanomolar (competitive binding with alpha-bungarotoxin gives Ki=1.66 nM on muscle nAChR and Ki=4.84 nM on alpha-7). Also shows moderate inhibition on GABA(A) alpha-1-beta-3-gamma-2 receptor (GABRA1-GABRB3-GABRG2) (IC(50)=0.68 uM), and a lower inhibition on alpha-1-beta-2-gamma-2 (GABRA1-GABRB2-GABRG2) and alpha-3-beta-2-gamma-2 (GABRA3-GABRB2-GABRG2). This is Long neurotoxin Tx-NM3-1 from Naja melanoleuca (Forest cobra).